The primary structure comprises 610 residues: Elongation factor 4 (610 aa).

In terms of domain architecture, tr-type G spans 14–196 (NRIRNFSIIA…ALVANIPPPK (183 aa)). GTP-binding positions include 26-31 (DHGKST) and 143-146 (NKID).

Belongs to the TRAFAC class translation factor GTPase superfamily. Classic translation factor GTPase family. LepA subfamily.

The protein resides in the cell inner membrane. It catalyses the reaction GTP + H2O = GDP + phosphate + H(+). Functionally, required for accurate and efficient protein synthesis under certain stress conditions. May act as a fidelity factor of the translation reaction, by catalyzing a one-codon backward translocation of tRNAs on improperly translocated ribosomes. Back-translocation proceeds from a post-translocation (POST) complex to a pre-translocation (PRE) complex, thus giving elongation factor G a second chance to translocate the tRNAs correctly. Binds to ribosomes in a GTP-dependent manner. This chain is Elongation factor 4, found in Legionella pneumophila (strain Paris).